A 337-amino-acid polypeptide reads, in one-letter code: Inositol 2-dehydrogenase 1 (337 aa).

It belongs to the Gfo/Idh/MocA family. In terms of assembly, homotetramer.

The catalysed reaction is myo-inositol + NAD(+) = scyllo-inosose + NADH + H(+). Its function is as follows. Involved in the oxidation of myo-inositol (MI) to 2-keto-myo-inositol (2KMI or 2-inosose). In Saccharopolyspora erythraea (strain ATCC 11635 / DSM 40517 / JCM 4748 / NBRC 13426 / NCIMB 8594 / NRRL 2338), this protein is Inositol 2-dehydrogenase 1.